The sequence spans 112 residues: Tyrosine-protein phosphatase 7 (112 aa).

Positions 1–112 (NNVTIIVMIT…SSPESGPIVV (112 aa)) constitute a Tyrosine-protein phosphatase domain. A substrate-binding site is contributed by aspartate 82.

Belongs to the protein-tyrosine phosphatase family.

It carries out the reaction O-phospho-L-tyrosyl-[protein] + H2O = L-tyrosyl-[protein] + phosphate. The sequence is that of Tyrosine-protein phosphatase 7 (STY-7) from Styela plicata (Wrinkled sea squirt).